We begin with the raw amino-acid sequence, 427 residues long: ATP-dependent RNA helicase DDX39A (427 aa).

The segment covering 1-19 has biased composition (acidic residues); it reads MAEQDVENELLDYDEDEEP. Residues 1-35 are disordered; that stretch reads MAEQDVENELLDYDEDEEPQVPQESTPAPPKKDVK. At Ala2 the chain carries N-acetylalanine. A Glycyl lysine isopeptide (Lys-Gly) (interchain with G-Cter in SUMO2) cross-link involves residue Lys31. An N6-acetyllysine; alternate modification is found at Lys35. Lys35 is covalently cross-linked (Glycyl lysine isopeptide (Lys-Gly) (interchain with G-Cter in SUMO2); alternate). Ser37 carries the phosphoserine modification. Positions 44–72 match the Q motif motif; it reads SGFRDFLLKPELLRAIVDCGFEHPSEVQH. Residues 75–248 form the Helicase ATP-binding domain; the sequence is IPQAILGMDV…RKFMQDPMEV (174 aa). 88–95 provides a ligand contact to ATP; it reads AKSGMGKT. Residues Lys154 and Lys162 each participate in a glycyl lysine isopeptide (Lys-Gly) (interchain with G-Cter in SUMO2) cross-link. Phosphothreonine is present on Thr171. A DECD box motif is present at residues 195-198; the sequence is DECD. Residues Lys240 and Lys255 each participate in a glycyl lysine isopeptide (Lys-Gly) (interchain with G-Cter in SUMO2) cross-link. Residues 260-421 form the Helicase C-terminal domain; it reads GLQQYYVKLK…ELPEEIDIST (162 aa). Ser426 is modified (phosphoserine).

Belongs to the DEAD box helicase family. DECD subfamily. As to quaternary structure, binds ALYREF/THOC4 and DDX39B/BAT1. Interacts with the apo-AREX complex component SARNP. Interacts with MX1. Interacts with MCM3AP isoform GANP. Interacts with ECD. Interacts with PHAX; this interaction stimulates PHAX RNA binding activity. SUMOylated by RANBP2; SUMOylation modification affects its ability to bind RNA.

It localises to the nucleus. The protein resides in the cytoplasm. The catalysed reaction is ATP + H2O = ADP + phosphate + H(+). In terms of biological role, helicase that plays an essential role in mRNA export and is involved in multiple steps in RNA metabolism including alternative splicing. Regulates nuclear mRNA export to the cytoplasm through association with ECD. Also involved in spliceosomal uridine-rich small nuclear RNA (U snRNA) export by stimulating the RNA binding of adapter PHAX. Plays a role in the negative regulation of type I IFN production by increasing the nuclear retention of antiviral transcripts and thus reducing their protein expression. Independently of the interferon pathway, plays an antiviral role against alphaviruses by binding to a 5' conserved sequence element in the viral genomic RNA. The protein is ATP-dependent RNA helicase DDX39A (Ddx39a) of Rattus norvegicus (Rat).